The sequence spans 2211 residues: Activating signal cointegrator 1 complex subunit 3 (2211 aa).

Residues 495–678 (ETAYNTNENM…FLHVNPYIGL (184 aa)) form the Helicase ATP-binding 1 domain. Residue 508–515 (APTGAGKT) participates in ATP binding. A DEVH box motif is present at residues 620 to 623 (DEVH). The region spanning 717 to 923 (VLKQIMAGHQ…GTVTNVEEAV (207 aa)) is the Helicase C-terminal 1 domain. In terms of domain architecture, SEC63 1 spans 987–1296 (STDLGRTASH…GAEAVCIINF (310 aa)). In terms of domain architecture, Helicase ATP-binding 2 spans 1345–1520 (HTLYHTDCNV…WLNINQMGLF (176 aa)). 1358 to 1365 (APTGSGKT) is an ATP binding site. Positions 1462-1465 (DEIH) match the DEIH box motif. In terms of domain architecture, Helicase C-terminal 2 spans 1553-1760 (PAFQAIRSHS…GTITSKQDAM (208 aa)). The SEC63 2 domain occupies 1821 to 2184 (PLTYGRIASY…YLGMDQQYDI (364 aa)).

Belongs to the helicase family.

The protein localises to the nucleus. The protein resides in the nucleus speckle. It is found in the cytoplasm. It localises to the cytosol. The catalysed reaction is Couples ATP hydrolysis with the unwinding of duplex DNA by translocating in the 3'-5' direction.. The enzyme catalyses ATP + H2O = ADP + phosphate + H(+). In terms of biological role, 3'-5' DNA helicase involved in repair of alkylated DNA. Promotes DNA unwinding to generate single-stranded substrate needed for ALKBH3, enabling ALKBH3 to process alkylated N3-methylcytosine (3mC) within double-stranded regions. Also involved in activation of the ribosome quality control (RQC) pathway, a pathway that degrades nascent peptide chains during problematic translation. Drives the splitting of stalled ribosomes. The polypeptide is Activating signal cointegrator 1 complex subunit 3 (ascc3) (Gallus gallus (Chicken)).